Consider the following 721-residue polypeptide: MVPLTFLRTKASRSLPIMLAALIFAGCGTQAPDQTAAHMQGSAQADSGFYLQQMSQSSNDTKTNWQLLAIRALLNEGKTQQAVDLYNQLPQELNNTQRGEQSLLAAELKIAQKEYPAAKKLLADIDTKALENNQQARYWQAVIAAEQGRPSLPLLRALIAQEPLLSGADKQKNIDTTWQALSSMTPEQSQALVINADENVLQGWLDLQQMWFNNRSDPKMLKAGITDWQTRYPQNPGAKMLPTQLVNVQNFQPASVSKIALLLPLNGQAAVFGRTIQQGFEAAKNGTTAVAGNAVPAQAAQAANVNDVISPSAVETSDLTSAQAPAQGTMQNPVTAPTTPPATTQAPAETAAPAEAQTPVVPQAAPATDAATAQPQTTTPDQQPAAQPQAVAATTANPGAELKIYDTSSQPLDQVLAQVQKDGASIVVGPLLKNNVEELMKSNTSLNVLALNQPEQVQNRANICYFALSPEDEARDAARHIHEQGKQAPLLLTPRSALGDRVATAFAQEWQQLGGNIVLQQKFGSTSELRAGVNGGSGIALTGSPVSASLPQQQGVTIGGLTIPAPPTDAQISGGGKVDAAYIVATPEEIAFIKPMIAMRNGSQSGVTLYASSRSAQGTAGPDFRLEMDGLQYSEIPMLAGSNPALMQQALSSVRNDYSLARLYAMGVDAWALANHFTQMRQVPGFELNGNTGDLTATQDCVINRKLSWLKYQQGQIVPAS.

Positions 1–26 are cleaved as a signal peptide; sequence MVPLTFLRTKASRSLPIMLAALIFAG. Cys-27 carries the N-palmitoyl cysteine lipid modification. Cys-27 carries the S-diacylglycerol cysteine lipid modification. Positions 316–330 are enriched in polar residues; it reads TSDLTSAQAPAQGTM. A disordered region spans residues 316–393; the sequence is TSDLTSAQAP…PAAQPQAVAA (78 aa). Over residues 331-393 the composition is skewed to low complexity; it reads QNPVTAPTTP…PAAQPQAVAA (63 aa).

It belongs to the LpoA family. Interacts with PBP1a.

It is found in the cell outer membrane. Regulator of peptidoglycan synthesis that is essential for the function of penicillin-binding protein 1A (PBP1a). This Enterobacter sp. (strain 638) protein is Penicillin-binding protein activator LpoA.